Reading from the N-terminus, the 364-residue chain is Chorismate synthase (364 aa).

Arg48 provides a ligand contact to NADP(+). FMN-binding positions include 131–133, 243–244, Gly288, 303–307, and Arg329; these read RAS, NA, and KPTSS.

Belongs to the chorismate synthase family. As to quaternary structure, homotetramer. Requires FMNH2 as cofactor.

The enzyme catalyses 5-O-(1-carboxyvinyl)-3-phosphoshikimate = chorismate + phosphate. It participates in metabolic intermediate biosynthesis; chorismate biosynthesis; chorismate from D-erythrose 4-phosphate and phosphoenolpyruvate: step 7/7. Its function is as follows. Catalyzes the anti-1,4-elimination of the C-3 phosphate and the C-6 proR hydrogen from 5-enolpyruvylshikimate-3-phosphate (EPSP) to yield chorismate, which is the branch point compound that serves as the starting substrate for the three terminal pathways of aromatic amino acid biosynthesis. This reaction introduces a second double bond into the aromatic ring system. The protein is Chorismate synthase of Bartonella bacilliformis (strain ATCC 35685 / KC583 / Herrer 020/F12,63).